The primary structure comprises 312 residues: Olfactory receptor 6C76 (312 aa).

Over 1 to 23 (MKNRTSVTDFILLGLTDNPQLQV) the chain is Extracellular. Asparagine 3 carries an N-linked (GlcNAc...) asparagine glycan. A helical membrane pass occupies residues 24–44 (VIFSFLFLTYVLSVTGNLTII). Topologically, residues 45–57 (SLTLLDSHLKTPM) are cytoplasmic. The chain crosses the membrane as a helical span at residues 58–80 (YFFLRNFSLEISFTSVCNPRFLI). The Extracellular segment spans residues 81 to 94 (SILTGDKSISYNAC). Cysteine 94 and cysteine 176 form a disulfide bridge. The helical transmembrane segment at 95 to 115 (AAQLFFFIFLGSTEFFLLASM) threads the bilayer. At 116–142 (SYDCYVAICKPLHYTTIMSDRICYQLI) the chain is on the cytoplasmic side. The chain crosses the membrane as a helical span at residues 143–163 (ISSWLAGFLVIFPPLAMGLQL). Over 164–195 (DFCDSNVIDHFTCDSAPLLQISCTDTSTLELM) the chain is Extracellular. A helical transmembrane segment spans residues 196–216 (SFILALFTLISTLILVILSYT). Residues 217–238 (YIIRTILRIPSAQQRKKAFSTC) are Cytoplasmic-facing. Residues 239–259 (SSHVIVVSISYGSCIFMYVKT) form a helical membrane-spanning segment. At 260–267 (SAKEGVAL) the chain is on the extracellular side. Residues 268 to 288 (TKGVAILNTSVAPMLNPFIYT) traverse the membrane as a helical segment. Over 289-312 (LRNQQVKQAFKDVLRKISHKKKKH) the chain is Cytoplasmic.

It belongs to the G-protein coupled receptor 1 family.

It is found in the cell membrane. In terms of biological role, odorant receptor. The protein is Olfactory receptor 6C76 (OR6C76) of Homo sapiens (Human).